Reading from the N-terminus, the 488-residue chain is Probable cytochrome P450 6u1 (488 aa).

A heme-binding site is contributed by cysteine 430.

This sequence belongs to the cytochrome P450 family. Heme serves as cofactor.

The protein resides in the endoplasmic reticulum membrane. It is found in the microsome membrane. Its function is as follows. May be involved in the metabolism of insect hormones and in the breakdown of synthetic insecticides. The polypeptide is Probable cytochrome P450 6u1 (Cyp6u1) (Drosophila melanogaster (Fruit fly)).